Consider the following 841-residue polypeptide: Transcription regulator protein BACH2 (841 aa).

One can recognise a BTB domain in the interval 37 to 103; sequence CDVTLIVERK…AYTAKLLLSR (67 aa). Disordered stretches follow at residues 153 to 173, 204 to 226, and 246 to 329; these read HEDCENSAGEEEDEEEETMDS, EALLPEPDVPTDTKESSEKDALT, and SSHS…AACL. The segment covering 160–172 has biased composition (acidic residues); the sequence is AGEEEDEEEETMD. 2 stretches are compositionally biased toward basic and acidic residues: residues 214–224 and 298–313; these read TDTKESSEKDA and PDAKDRAGDVEMDRKQ. Ser-315 carries the post-translational modification Phosphoserine. Glycyl lysine isopeptide (Lys-Gly) (interchain with G-Cter in SUMO2) cross-links involve residues Lys-382 and Lys-421. The residue at position 521 (Ser-521) is a Phosphoserine; by RPS6KB1. The interval 583 to 610 is disordered; that stretch reads QSYGTNSSDESGSFSEADSESCPVQDRG. Residues 584-598 are compositionally biased toward polar residues; the sequence is SYGTNSSDESGSFSE. One can recognise a bZIP domain in the interval 646–709; the sequence is FIHDVRRRSK…GELLDNFSCL (64 aa). The segment at 651–667 is basic motif; that stretch reads RRRSKNRIAAQRCRKRK. Residues 671–678 form a leucine-zipper region; it reads IQNLECEI. Positions 777 to 816 are disordered; the sequence is PGPPWAPSNTSENCTSGRRLEGTDPGTFSERGPPLEPRSQ. Positions 821-841 match the Nuclear export signal motif; the sequence is DFCQEMTDKCTTDEQPRKDYT.

This sequence belongs to the bZIP family. CNC subfamily. In terms of assembly, homodimer; disulfide-linked. Heterodimer of BACH2 and Maf-related transcription factors. Post-translationally, phosphorylation at Ser-521 downstream of the PI-3K pathway promotes nuclear export. The reversible disulfide bond may provide a mechanism to regulate the activity in oxidative stress responses. As to expression, B-cell specific.

The protein resides in the cytoplasm. The protein localises to the nucleus. Its function is as follows. Transcriptional regulator that acts as a repressor or activator. Binds to Maf recognition elements (MARE). Plays an important role in coordinating transcription activation and repression by MAFK. Induces apoptosis in response to oxidative stress through repression of the antiapoptotic factor HMOX1. Positively regulates the nuclear import of actin. Is a key regulator of adaptive immunity, crucial for the maintenance of regulatory T-cell function and B-cell maturation. The sequence is that of Transcription regulator protein BACH2 (BACH2) from Homo sapiens (Human).